The sequence spans 285 residues: Cell division protein ZipA (285 aa).

Position 1 (methionine 1) is a topological domain, periplasmic. The helical transmembrane segment at 2–22 threads the bilayer; sequence EIGLREWLIVIGIVVIGGILF. Residues 23–285 are Cytoplasmic-facing; it reads DGWRRMRGSK…FERRQLTHKR (263 aa). Residues 49–88 are disordered; that stretch reads AVSENSELLGPSRSVDFPQGAGFEPDEENLPSLSVRGPSR.

Belongs to the ZipA family. Interacts with FtsZ via their C-terminal domains.

The protein resides in the cell inner membrane. Functionally, essential cell division protein that stabilizes the FtsZ protofilaments by cross-linking them and that serves as a cytoplasmic membrane anchor for the Z ring. Also required for the recruitment to the septal ring of downstream cell division proteins. The polypeptide is Cell division protein ZipA (Azotobacter vinelandii (strain DJ / ATCC BAA-1303)).